A 155-amino-acid chain; its full sequence is Transcriptional repressor NrdR (155 aa).

Residues 1–10 (MQCPHCHHNS) show a composition bias toward basic residues. Residues 1-21 (MQCPHCHHNSSRVVDSRPTDG) are disordered. A zinc finger lies at 3–34 (CPHCHHNSSRVVDSRPTDGGRAIRRRRECENC). Residues 49-139 (LLVIKKNGTR…VYRQFKDMSV (91 aa)) enclose the ATP-cone domain.

It belongs to the NrdR family. It depends on Zn(2+) as a cofactor.

Its function is as follows. Negatively regulates transcription of bacterial ribonucleotide reductase nrd genes and operons by binding to NrdR-boxes. In Lacticaseibacillus casei (strain BL23) (Lactobacillus casei), this protein is Transcriptional repressor NrdR.